A 118-amino-acid polypeptide reads, in one-letter code: Large ribosomal subunit protein bL20 (118 aa).

It belongs to the bacterial ribosomal protein bL20 family.

In terms of biological role, binds directly to 23S ribosomal RNA and is necessary for the in vitro assembly process of the 50S ribosomal subunit. It is not involved in the protein synthesizing functions of that subunit. The protein is Large ribosomal subunit protein bL20 of Elusimicrobium minutum (strain Pei191).